The primary structure comprises 700 residues: Elongation factor G (700 aa).

Positions 8–290 (DKYRNIGISA…AVVELLPSPL (283 aa)) constitute a tr-type G domain. GTP contacts are provided by residues 17–24 (AHIDAGKT), 88–92 (DTPGH), and 142–145 (NKMD).

This sequence belongs to the TRAFAC class translation factor GTPase superfamily. Classic translation factor GTPase family. EF-G/EF-2 subfamily.

Its subcellular location is the cytoplasm. Functionally, catalyzes the GTP-dependent ribosomal translocation step during translation elongation. During this step, the ribosome changes from the pre-translocational (PRE) to the post-translocational (POST) state as the newly formed A-site-bound peptidyl-tRNA and P-site-bound deacylated tRNA move to the P and E sites, respectively. Catalyzes the coordinated movement of the two tRNA molecules, the mRNA and conformational changes in the ribosome. The sequence is that of Elongation factor G from Polynucleobacter necessarius subsp. necessarius (strain STIR1).